The following is a 384-amino-acid chain: 8-amino-7-oxononanoate synthase (384 aa).

Arg-21 contributes to the substrate binding site. 108–109 is a binding site for pyridoxal 5'-phosphate; sequence GY. His-133 contacts substrate. Pyridoxal 5'-phosphate-binding residues include Ser-179, His-207, and Thr-233. Position 236 is an N6-(pyridoxal phosphate)lysine (Lys-236). Substrate is bound at residue Thr-350.

Belongs to the class-II pyridoxal-phosphate-dependent aminotransferase family. BioF subfamily. As to quaternary structure, homodimer. Pyridoxal 5'-phosphate serves as cofactor.

The enzyme catalyses 6-carboxyhexanoyl-[ACP] + L-alanine + H(+) = (8S)-8-amino-7-oxononanoate + holo-[ACP] + CO2. It participates in cofactor biosynthesis; biotin biosynthesis. Its function is as follows. Catalyzes the decarboxylative condensation of pimeloyl-[acyl-carrier protein] and L-alanine to produce 8-amino-7-oxononanoate (AON), [acyl-carrier protein], and carbon dioxide. This is 8-amino-7-oxononanoate synthase from Buchnera aphidicola subsp. Baizongia pistaciae (strain Bp).